The primary structure comprises 239 residues: MAEDATSSHPSRYVKLTKDQDAPAEDIRPGELNQPVHVPQLEGRRCSECGQVLPESYEPPADEPWTTGIFGCTDDPETCRTGLFCPCVLFGRNVEAVREDIPWTTPCVCHAVFVEGGITLAILTAIFHGVDPRTSFLIGEGLVFSWWLCATYTGIFRQGLQRKYHLKNSPCDPCMVHCCLHWCANCQEHRERTGRLAENNAVPMTVVNPPPVQEMSMLEEVEEKGAEKSEHDDVEVIPL.

The span at 1–10 (MAEDATSSHP) shows a compositional bias: polar residues. Residues 1–33 (MAEDATSSHPSRYVKLTKDQDAPAEDIRPGELN) are disordered. A compositionally biased stretch (basic and acidic residues) spans 16 to 29 (LTKDQDAPAEDIRP). A run of 2 helical transmembrane segments spans residues 107–127 (CVCH…TAIF) and 136–156 (FLIG…TGIF).

It belongs to the cornifelin family. As to expression, expressed in roots, leaves, stalks, apical meristems, immature ears, endosperm, pericarp and tassel spikelets.

The protein localises to the membrane. This is Cell number regulator 6 (CNR6) from Zea mays (Maize).